We begin with the raw amino-acid sequence, 627 residues long: MEKMSYTFSQQYEEKIRPCIDTIDNLRSLGVEKDLALPAIAVIGDQSSGKSSVLEALSGVPLPRGSGIVTRCPLELKMIRSKEDEKWHGRISYQNHEEDFDDPAEVEKKIREAQDEMAGAGVGISEELISLQITSANVPDLTLIDLPGIARVAVKGQPENIGDQIKRLIRMFITKQETINLVVVPCNVDIATTEALQMAQAEDPEGERTLGILTKPDLVDKGTEGTVVDIVHNEVIHLTKGYMIVRCRGQKEIMDQVTLNEATETESAFFKDHPHFRKLYEEGFATIPKLAEKLTIELVHHIQRSLPRLEDQIQTKLAETQKELEAYGDGPPSDPAERLSFFIDKVTAFTCDTLNLTTGEEVKSASKLLIFPELRQEFAYWNSFLDSSGYSFKLKIEEEVDNYEVKYRGRELPGFINYKTFEGLVREQMKLLEEPALKMLKNVSDMVKKKFIQLAQSSFTGFPILLKIAKTKIEAIKQDKECLAESMLRTQFKMELIVYTQDGTYSQSLLRSKEKREEDEEDTENFDCMTVGIATSNHATLSEMKLHLESYYMIASQRLADQIPMVIRYLLLQEAALELQRSMLQLLQDKDGVDDMLKEDFDIGQKRENLLSRQKRLMKAQNLLATY.

The region spanning 34-307 is the Dynamin-type G domain; it reads DLALPAIAVI…LVHHIQRSLP (274 aa). The segment at 44–51 is G1 motif; it reads GDQSSGKS. 44–51 lines the GTP pocket; sequence GDQSSGKS. The interval 69-71 is G2 motif; it reads VTR. The G3 motif stretch occupies residues 145-148; it reads DLPG. Residues 145 to 149 and 214 to 217 each bind GTP; these read DLPGI and TKPD. The segment at 214–217 is G4 motif; it reads TKPD. A G5 motif region spans residues 246–249; it reads RCRG. In terms of domain architecture, GED spans 541–627; that stretch reads LSEMKLHLES…MKAQNLLATY (87 aa).

It belongs to the TRAFAC class dynamin-like GTPase superfamily. Dynamin/Fzo/YdjA family.

It is found in the cytoplasm. The polypeptide is Interferon-induced GTP-binding protein MxB (mxb) (Danio rerio (Zebrafish)).